The chain runs to 102 residues: UPF0751 protein Dhaf_1351 (102 aa).

It belongs to the UPF0751 family.

This is UPF0751 protein Dhaf_1351 from Desulfitobacterium hafniense (strain DSM 10664 / DCB-2).